The sequence spans 109 residues: uncharacterized protein (109 aa).

Residues 1-28 (MNMLAYFLYCRQLLLAVVLIEFPPRLCG) form the signal peptide.

This is an uncharacterized protein from Homo sapiens (Human).